The primary structure comprises 328 residues: Malate dehydrogenase (328 aa).

Residue 11-17 (GAAGQIG) participates in NAD(+) binding. Residues Arg94 and Arg100 each coordinate substrate. Residues Asn107, Gln114, and 131–133 (VGN) contribute to the NAD(+) site. Substrate-binding residues include Asn133 and Arg164. Catalysis depends on His189, which acts as the Proton acceptor.

The protein belongs to the LDH/MDH superfamily. MDH type 2 family.

It carries out the reaction (S)-malate + NAD(+) = oxaloacetate + NADH + H(+). Catalyzes the reversible oxidation of malate to oxaloacetate. The chain is Malate dehydrogenase from Acinetobacter baumannii (strain AB0057).